A 298-amino-acid chain; its full sequence is tRNA-cytidine(32) 2-sulfurtransferase (298 aa).

The tract at residues 1–26 (MTAVISLPDPPQRASRGPRVAGPGQD) is disordered. The PP-loop motif motif lies at 57 to 62 (SGGKDS). [4Fe-4S] cluster contacts are provided by C132, C135, and C223.

The protein belongs to the TtcA family. Homodimer. Mg(2+) serves as cofactor. Requires [4Fe-4S] cluster as cofactor.

The protein localises to the cytoplasm. It catalyses the reaction cytidine(32) in tRNA + S-sulfanyl-L-cysteinyl-[cysteine desulfurase] + AH2 + ATP = 2-thiocytidine(32) in tRNA + L-cysteinyl-[cysteine desulfurase] + A + AMP + diphosphate + H(+). The protein operates within tRNA modification. In terms of biological role, catalyzes the ATP-dependent 2-thiolation of cytidine in position 32 of tRNA, to form 2-thiocytidine (s(2)C32). The sulfur atoms are provided by the cysteine/cysteine desulfurase (IscS) system. The polypeptide is tRNA-cytidine(32) 2-sulfurtransferase (Stenotrophomonas maltophilia (strain R551-3)).